The primary structure comprises 390 residues: Delta-aminolevulinic acid dehydratase, chloroplastic (390 aa).

Residues M1 to A24 constitute a chloroplast transit peptide. The segment at V34–F69 is disordered. K251 (schiff-base intermediate with substrate) is an active-site residue. 5-aminolevulinate-binding residues include R261 and K281. A Mg(2+)-binding site is contributed by E297. The active-site Schiff-base intermediate with substrate is K312. Residues S338 and Y377 each coordinate 5-aminolevulinate.

This sequence belongs to the ALAD family. Homooctamer. Mg(2+) serves as cofactor.

The protein localises to the plastid. Its subcellular location is the chloroplast. The catalysed reaction is 2 5-aminolevulinate = porphobilinogen + 2 H2O + H(+). The protein operates within porphyrin-containing compound metabolism; protoporphyrin-IX biosynthesis; coproporphyrinogen-III from 5-aminolevulinate: step 1/4. Catalyzes an early step in the biosynthesis of tetrapyrroles. Binds two molecules of 5-aminolevulinate per subunit, each at a distinct site, and catalyzes their condensation to form porphobilinogen. The polypeptide is Delta-aminolevulinic acid dehydratase, chloroplastic (HEMB) (Chlamydomonas reinhardtii (Chlamydomonas smithii)).